The sequence spans 321 residues: Probable 2-oxoglutarate-dependent dioxygenase AOP1.2 (321 aa).

The Fe2OG dioxygenase domain occupies 165–270; the sequence is TYYLTRLMKY…RYSTGLFSIP (106 aa). 3 residues coordinate Fe cation: His194, Asp196, and His251. Arg261 is a binding site for 2-oxoglutarate.

Belongs to the iron/ascorbate-dependent oxidoreductase family. Fe(2+) serves as cofactor.

Its function is as follows. Probable 2-oxoglutarate-dependent dioxygenase that may be involved in glucosinolates biosynthesis. May play a role in the production of aliphatic glucosinolates. This is Probable 2-oxoglutarate-dependent dioxygenase AOP1.2 (AOP1.2) from Arabidopsis thaliana (Mouse-ear cress).